The sequence spans 748 residues: ATP-dependent rRNA helicase SPB4 (748 aa).

The Q motif signature appears at Trp15–Ala43. One can recognise a Helicase ATP-binding domain in the interval Ile46–Ile260. Ala59–Thr66 is an ATP binding site. The disordered stretch occupies residues Glu119 to Leu156. The span at Pro132–Ser142 shows a compositional bias: low complexity. The segment covering Pro143 to Pro152 has biased composition (pro residues). The DEAD box motif lies at Asp207 to Asp210. One can recognise a Helicase C-terminal domain in the interval Lys295–Leu460. The tract at residues Ala614–Glu748 is disordered. Composition is skewed to basic and acidic residues over residues Ala626 to Trp669 and Glu708 to Ser730. Residues Gly732–Glu748 are compositionally biased toward gly residues.

The protein belongs to the DEAD box helicase family. DDX55/SPB4 subfamily. Component of pre-60S ribosomal complexes.

Its subcellular location is the nucleus. It localises to the nucleolus. The enzyme catalyses ATP + H2O = ADP + phosphate + H(+). Functionally, ATP-binding RNA helicase involved in the biogenesis of 60S ribosomal subunits. Binds 90S pre-ribosomal particles and dissociates from pre-60S ribosomal particles after processing of 27SB pre-rRNA. Required for the normal formation of 18S rRNA through the processing of pre-rRNAs at sites A0, A1 and A2, and the normal formation of 25S and 5.8S rRNAs through the processing of pre-rRNAs at sites C1 and C2. The polypeptide is ATP-dependent rRNA helicase SPB4 (Cryptococcus neoformans var. neoformans serotype D (strain B-3501A) (Filobasidiella neoformans)).